A 291-amino-acid polypeptide reads, in one-letter code: Co-chaperone protein DjlA (291 aa).

Residues 1–6 (MRYWGK) lie on the Periplasmic side of the membrane. Residues 7–31 (LLGLALGIVSSTGIWGMIMGLLMGH) form a helical membrane-spanning segment. The Cytoplasmic segment spans residues 32 to 291 (WIDRARASRR…ELLKSANQTK (260 aa)). Residues 177 to 223 (ESPTGQQSRQNQSRQNGKSQQRRNNGYSNGHSYGGQRPPSPLRGPTV) form a disordered region. Residues 181–211 (GQQSRQNQSRQNGKSQQRRNNGYSNGHSYGG) show a composition bias toward low complexity. Positions 225 to 291 (SACRTLGVRS…ELLKSANQTK (67 aa)) constitute a J domain.

As to quaternary structure, homodimer.

The protein resides in the cell inner membrane. Regulatory DnaK co-chaperone. Direct interaction between DnaK and DjlA is needed for the induction of the wcaABCDE operon, involved in the synthesis of a colanic acid polysaccharide capsule, possibly through activation of the RcsB/RcsC phosphotransfer signaling pathway. The colanic acid capsule may help the bacterium survive conditions outside the host. The polypeptide is Co-chaperone protein DjlA (Pectobacterium atrosepticum (strain SCRI 1043 / ATCC BAA-672) (Erwinia carotovora subsp. atroseptica)).